The primary structure comprises 278 residues: Alcohol dehydrogenase-related 31 kDa protein (278 aa).

11 to 34 (YVADCGGIALETSKVLMTKNIAKL) provides a ligand contact to NAD(+). Ser139 is a substrate binding site. Tyr152 acts as the Proton acceptor in catalysis.

It belongs to the short-chain dehydrogenases/reductases (SDR) family.

This Drosophila pseudoobscura pseudoobscura (Fruit fly) protein is Alcohol dehydrogenase-related 31 kDa protein (Adhr).